We begin with the raw amino-acid sequence, 527 residues long: MAQAEDAVQPLLQQFQQLFFISKIAGILPQDLEKFRSRNLLEKSRNGMIYMLSTLILYVVLYNILIYSFGEEDRSLKASQSTLTFVIGLFLTYIGLIMMVSDQLTALRNQGRIGELYERIRLVDERLYKEGCVMDNSTIGRRIRIMLIMTVIFELSILVSTYVKLVDYSQWMSLLWIVSAIPTFINTLDKIWFAVSLYALKERFEAINATLEELVDTHEKHKLWLRGNQEVPPPLDSSQPPQYDSNLEYLYKELGGMDIGSIGKSSVSGSGKNKVAPVAHSMNSFGEAIDAASRKPPPPPLATNMVHESELGNAAKVEEKLNNLCQVHDEICEIGKALNELWSYPILSLMAYGFLIFTAQLYFLYCATQYQSIPSLFRSAKNPFITVIVLSYTSGKCVYLIYLSWKTSQASKRTGISLHKCGVVADDNLLYEIVNHLSLKLLNHSVDFSACGFFTLDMETLYGVSGGITSYLIILIQFNLAAQQAKEAIQTFNSLNDTAGLVGAATDMDNISSTLRDFVTTTMTPAV.

Residues 1-46 are Cytoplasmic-facing; sequence MAQAEDAVQPLLQQFQQLFFISKIAGILPQDLEKFRSRNLLEKSRN. A helical membrane pass occupies residues 47–67; the sequence is GMIYMLSTLILYVVLYNILIY. Topologically, residues 68–80 are extracellular; the sequence is SFGEEDRSLKASQ. A helical membrane pass occupies residues 81–101; that stretch reads STLTFVIGLFLTYIGLIMMVS. The Cytoplasmic segment spans residues 102 to 144; sequence DQLTALRNQGRIGELYERIRLVDERLYKEGCVMDNSTIGRRIR. A helical membrane pass occupies residues 145 to 165; it reads IMLIMTVIFELSILVSTYVKL. Over 166-174 the chain is Extracellular; sequence VDYSQWMSL. A helical transmembrane segment spans residues 175 to 195; it reads LWIVSAIPTFINTLDKIWFAV. Residues 196-345 are Cytoplasmic-facing; sequence SLYALKERFE…KALNELWSYP (150 aa). The chain crosses the membrane as a helical span at residues 346-366; that stretch reads ILSLMAYGFLIFTAQLYFLYC. The Extracellular segment spans residues 367 to 382; it reads ATQYQSIPSLFRSAKN. The helical transmembrane segment at 383–403 threads the bilayer; that stretch reads PFITVIVLSYTSGKCVYLIYL. Topologically, residues 404-460 are cytoplasmic; the sequence is SWKTSQASKRTGISLHKCGVVADDNLLYEIVNHLSLKLLNHSVDFSACGFFTLDMET. Residues 461 to 481 traverse the membrane as a helical segment; it reads LYGVSGGITSYLIILIQFNLA. Topologically, residues 482–527 are extracellular; sequence AQQAKEAIQTFNSLNDTAGLVGAATDMDNISSTLRDFVTTTMTPAV. N-linked (GlcNAc...) asparagine glycans are attached at residues N496 and N510.

This sequence belongs to the insect chemoreceptor superfamily. Gustatory receptor (GR) family. Gr66a subfamily. Taste hairs in labial palps, labral and cibarial sense organs and forelegs. In larvae, is expressed in neurons of the terminal external chemosensory organ, as well as in the dorsal, ventral, and posterior pharyngeal sense organs.

It is found in the cell membrane. In terms of biological role, gustatory receptor required for response to the bitter in taste neurons. Gr66a cells respond to bitter compounds such as caffeine, theophylline, threonine or valine. Flies avoid bitter substances, suggesting that Gr66a neuron activity is sufficient to mediate avoidance behavior. Required for sensing and avoiding N,N-Diethyl-meta-toluamide (DEET), the most widely used insect repellent worldwide, as well as to L-canavanine, a plant-derived insecticide. Gr66a neurons are also involved in the sex-specific perception of molecules inducing male avoidance behavior, probably through sensing 7-tricosene (7-T), a male cuticular pheromone and leading to inhibition of male-male courtship. Finally, also plays a role in oviposition behavior, in which females evaluate their environment and choose to lay eggs on substrates they may find aversive in other contexts. The polypeptide is Gustatory receptor for bitter taste 66a (Gr66a) (Drosophila melanogaster (Fruit fly)).